Consider the following 486-residue polypeptide: G2/mitotic-specific cyclin-4 (486 aa).

Disordered regions lie at residues 1-80 (MRSY…SSNK) and 105-126 (VLLN…DKEN). Positions 25–41 (ANLSSNHTTAGQPSTSS) are enriched in polar residues. The segment covering 108-123 (NDDDDETDDEFDDEED) has biased composition (acidic residues). The stretch at 122–184 (EDKENRYHDL…QSHTQDMRSI (63 aa)) forms a coiled coil. Residues 234–359 (EIFNYLHELE…FMIDVLEFDL (126 aa)) enclose the Cyclin N-terminal domain.

Belongs to the cyclin family. Cyclin AB subfamily. As to quaternary structure, interacts with IQG1.

Its function is as follows. 2/mitotic-specific cyclin essential for the control of the cell cycle at the G2/M (mitosis) transition. G2/M cyclins accumulate steadily during G2 and are abruptly destroyed at mitosis. Degradation is necessary for the cell to exit from mitosis. Plays a role in morphogenesis by negatively regulating polarized growth. Through binding to CDC28 regulates cytokinesis, partly by phosphorylation of the actomyosin ring component IQG1. This Candida albicans (strain SC5314 / ATCC MYA-2876) (Yeast) protein is G2/mitotic-specific cyclin-4 (CLB4).